Consider the following 133-residue polypeptide: Profilin Sal k 4.0301 (133 aa).

An intrachain disulfide couples C95 to C117.

The protein belongs to the profilin family. As to quaternary structure, occurs in many kinds of cells as a complex with monomeric actin in a 1:1 ratio. As to expression, expressed in pollen (at protein and mRNA level).

It is found in the cytoplasm. It localises to the cytoskeleton. Its function is as follows. Binds to actin and affects the structure of the cytoskeleton. At high concentrations, profilin prevents the polymerization of actin, whereas it enhances it at low concentrations. The sequence is that of Profilin Sal k 4.0301 from Kali turgidum (Prickly saltwort).